A 566-amino-acid chain; its full sequence is MFRINVDAGSDFLLVLEELVGKLSTNDIQSIYISDKPNSKGEQANSLCGRSVNDLGFKNGDLLFVTYESTGEPPKTESSAPLTTAKTTNGANVSINMNDISIPINKGPGPLKVDQLPVDGLLDKEEGMIMRPRSDLCRHGDKGMCEYCSPLPPWDKDYRKEKGFKHMSYHAHLNEINESKNNRNNATSYMAPLEEPNYNINLNCPSGSHAPYPKGICSKCQPPVITLQQQQFRMVDHVEYADSTILNKFIDSWRTTGVQRFGILYGRYEQFDKVPLGIKAVVEAIYEPPQSGELDGLTLLPWENERQVDEIAASLGLYKVGMTFTDLTDSGAKNGTVLCKRHKNSYFLSCLEVIMAAKYQVSNPNITKHSNSGRFSSKFVTCVISGGMNGEIEPRSYQVSNSAEALIKADIITGSTQPSMLYINDSEGKRYVPDVFYSKINEYGLEVKTNAKPAFPVEFLLVSLSDSFPLDPSPMFRENFPIENRDFMGDLQDLKSAYNYLNADPGDGSQLFDFHFLTYIAKTGILSHDELKLVLSYVRNKDQTDYLQLVESPGWMTFITILEQSV.

The 138-residue stretch at 238–375 folds into the MPN domain; the sequence is VEYADSTILN…ITKHSNSGRF (138 aa).

This sequence belongs to the NPL4 family.

Its subcellular location is the cytoplasm. The protein resides in the perinuclear region. The protein localises to the endoplasmic reticulum membrane. It localises to the nucleus membrane. Involved in the import of nuclear-targeted proteins into the nucleus and the export of poly(A) RNA out of the nucleus. Has a role in the endoplasmic reticulum-associated degradation (ERAD) pathway. The polypeptide is Nuclear protein localization protein 4 (NPL4) (Debaryomyces hansenii (strain ATCC 36239 / CBS 767 / BCRC 21394 / JCM 1990 / NBRC 0083 / IGC 2968) (Yeast)).